Here is a 533-residue protein sequence, read N- to C-terminus: MTIDWRQIAAKYCAHRDGSIPEPFKIKTLPKDTVLNVTKIPSECGLLTPKEIELTEKYDATALAEMIKDRKVTSVELVTAFCKRAAIAQQLVNCVNELFYEEALARAAELDEYYAKTGSLVGPLHGVPVSVKEHISIKNHTATASFLAKANIIAEKDSDLVATVRKAGAVFYCRTPQPQAIMHLETSSNLTGVTVNPFNRKLTPGGSSGGEGALLGIKASVLGIGSDIGGSIRSPAANNGLFGLRPSTLRLSRKGCQGAVSGQETILGVVGPLGRSVRDMNLFMKACIDSQPWLDDASLLPMPWRSVAPPKTLKVGIMRSDNVVNPQPPVARAMQMAIDQLSKNPDFDLVDVEPLDHKYSWDLISEMYWLDGGKVYYDLFNKVGEPILPLTEWIMHQPNVKPHDITAVWKLTAARDEYRNRYLKHLQAYGVDVLLTPVGPSPAPKLGEAKYWTYTSVWNLLDLPAVVFPVTTVDPKLDVKDESYIPMNEQDAANYETYSPEDYLDAPVSLQLVGKRWQDEELLAALDKIVSML.

Catalysis depends on charge relay system residues Lys-132 and Ser-207. The Acyl-ester intermediate role is filled by Ser-231.

It belongs to the amidase family.

The protein localises to the cytoplasm. Its subcellular location is the nucleus. The enzyme catalyses a monocarboxylic acid amide + H2O = a monocarboxylate + NH4(+). This Schizosaccharomyces pombe (strain 972 / ATCC 24843) (Fission yeast) protein is Putative amidase C550.07.